The following is a 340-amino-acid chain: Ketol-acid reductoisomerase (NADP(+)) (340 aa).

The KARI N-terminal Rossmann domain occupies 2-181; it reads AKVFYNGDIN…GSARAGVIET (180 aa). NADP(+) is bound by residues 25-28, arginine 48, serine 52, and 82-85; these read YGSQ and DEHQ. Residue histidine 107 is part of the active site. Glycine 133 serves as a coordination point for NADP(+). The region spanning 182-327 is the KARI C-terminal knotted domain; sequence TFQEETETDL…RELREMMPFV (146 aa). Positions 190, 194, 226, and 230 each coordinate Mg(2+). Residue serine 251 participates in substrate binding.

The protein belongs to the ketol-acid reductoisomerase family. The cofactor is Mg(2+).

It catalyses the reaction (2R)-2,3-dihydroxy-3-methylbutanoate + NADP(+) = (2S)-2-acetolactate + NADPH + H(+). The enzyme catalyses (2R,3R)-2,3-dihydroxy-3-methylpentanoate + NADP(+) = (S)-2-ethyl-2-hydroxy-3-oxobutanoate + NADPH + H(+). It functions in the pathway amino-acid biosynthesis; L-isoleucine biosynthesis; L-isoleucine from 2-oxobutanoate: step 2/4. It participates in amino-acid biosynthesis; L-valine biosynthesis; L-valine from pyruvate: step 2/4. Functionally, involved in the biosynthesis of branched-chain amino acids (BCAA). Catalyzes an alkyl-migration followed by a ketol-acid reduction of (S)-2-acetolactate (S2AL) to yield (R)-2,3-dihydroxy-isovalerate. In the isomerase reaction, S2AL is rearranged via a Mg-dependent methyl migration to produce 3-hydroxy-3-methyl-2-ketobutyrate (HMKB). In the reductase reaction, this 2-ketoacid undergoes a metal-dependent reduction by NADPH to yield (R)-2,3-dihydroxy-isovalerate. The protein is Ketol-acid reductoisomerase (NADP(+)) of Halalkalibacterium halodurans (strain ATCC BAA-125 / DSM 18197 / FERM 7344 / JCM 9153 / C-125) (Bacillus halodurans).